We begin with the raw amino-acid sequence, 197 residues long: Probable GTP-binding protein EngB (197 aa).

Residues 22-195 (QLPELALAGR…WRTILNHLKV (174 aa)) form the EngB-type G domain. Residues 30–37 (GRSNVGKS), 57–61 (GKTQT), 75–78 (DVPG), 142–145 (TKAD), and 174–176 (FSS) contribute to the GTP site. Mg(2+) contacts are provided by serine 37 and threonine 59.

Belongs to the TRAFAC class TrmE-Era-EngA-EngB-Septin-like GTPase superfamily. EngB GTPase family. Mg(2+) serves as cofactor.

Functionally, necessary for normal cell division and for the maintenance of normal septation. This chain is Probable GTP-binding protein EngB, found in Shouchella clausii (strain KSM-K16) (Alkalihalobacillus clausii).